A 74-amino-acid polypeptide reads, in one-letter code: MKNQKSNTLWPFDLPLAPQPEGYQQQTIDRLAGLELRMKQLIRAIEVNNELLRTMQEQQNRVCTNGSGSVIVRM.

The stretch at 25-62 (QQTIDRLAGLELRMKQLIRAIEVNNELLRTMQEQQNRV) forms a coiled coil.

This is an uncharacterized protein from Bacillus subtilis (strain 168).